The sequence spans 403 residues: Alkaline protease 1 (403 aa).

An N-terminal signal peptide occupies residues 1–21; that stretch reads MQSIKRTLLLLGAILPAVLGA. Positions 22–125 are excised as a propeptide; sequence PVQETRRAAE…QIYYLDGLTT (104 aa). The region spanning 36 to 120 is the Inhibitor I9 domain; it reads KYIVTFKPGI…YVEEDQIYYL (85 aa). Residues 130–403 form the Peptidase S8 domain; the sequence is PWGLGSISHK…PNLLAYNGNA (274 aa). Catalysis depends on charge relay system residues Asp162 and His193. Asn253 carries N-linked (GlcNAc...) asparagine glycosylation. The active-site Charge relay system is Ser349.

This sequence belongs to the peptidase S8 family.

The protein localises to the secreted. It carries out the reaction Hydrolysis of proteins with broad specificity, and of Bz-Arg-OEt &gt; Ac-Tyr-OEt. Does not hydrolyze peptide amides.. In terms of biological role, secreted alkaline protease that allows assimilation of proteinaceous substrates. The polypeptide is Alkaline protease 1 (alp1) (Aspergillus flavus (strain ATCC 200026 / FGSC A1120 / IAM 13836 / NRRL 3357 / JCM 12722 / SRRC 167)).